Reading from the N-terminus, the 524-residue chain is Probable endopeptidase p60 (524 aa).

An N-terminal signal peptide occupies residues 1-27; it reads MNMKKATIAATAGIAVTAFAAPTIASA. The region spanning 28–71 is the LysM 1 domain; sequence STVVVEAGDTLWGIAQSKGTTVDALKKANNLTSDKIVPGQKLQV. An SH3b domain is found at 78–142; the sequence is KTEKSVSATW…VNGKYLGDAV (65 aa). The tract at residues 150 to 188 is disordered; the sequence is QEVKQETTKQTAPAAETKTEVKQSTPAPTAPKAAETKTA. A compositionally biased stretch (low complexity) spans 174–188; it reads TPAPTAPKAAETKTA. The LysM 2 domain occupies 196–239; the sequence is TTHTVKSGDTIWALSVKYGASVQDLMSWNNLSSSSIYVGQKIAV. Residues 272 to 299 are compositionally biased toward low complexity; the sequence is NTNTTVKKEVTTQTQTNTTKAPAQAAKP. Residues 272–313 are disordered; sequence NTNTTVKKEVTTQTQTNTTKAPAQAAKPAPAPAPAPTVNTNA. A LysM 3 domain is found at 314 to 357; that stretch reads STYTVKSGDSLSKIANTFGTSVSKIKALNNLTSDNLQVGTVLKV. Residues 360–408 are disordered; that stretch reads TVPTTNTNNNSNTTAPTTNTSNNNTSSNTSTPSKNTNTNTNQGSSNSAS. Low complexity predominate over residues 362–408; the sequence is PTTNTNNNSNTTAPTTNTSNNNTSSNTSTPSKNTNTNTNQGSSNSAS. The region spanning 406-524 is the NlpC/P60 domain; the sequence is SASASALIAE…GKYLVGFGRV (119 aa). The Nucleophile role is filled by Cys436. His486 functions as the Proton acceptor in the catalytic mechanism. Residue Asn498 is part of the active site.

Belongs to the peptidase C40 family.

This major extracellular protein may be involved in the invasion of non-professional phagocytic cells by Listeria. The protein is Probable endopeptidase p60 (iap) of Listeria welshimeri.